Reading from the N-terminus, the 1836-residue chain is U3 small nucleolar RNA-associated protein 10 (1836 aa).

The stretch at 245-283 (EVVGFLLLPSKYETLRNIDVDTRLTAYSIIAVLASIIPI) is one HEAT 1 repeat. The tract at residues 453–473 (SNSSVRDSDDVEFDAGEEDNN) is disordered. A compositionally biased stretch (acidic residues) spans 461-473 (DDVEFDAGEEDNN). HEAT repeat units follow at residues 585–623 (PLDLYLLIPIFLLGVYDETRVVRAGFVQLLRFIKETTTS) and 813–850 (VENRIKIVNKLIDLLNNDEPIESDPMDTLQTLKLDQDL). The interval 863-883 (QIPEQGPAKRRRRSSSSTKQA) is disordered. 2 consecutive transmembrane segments (helical) span residues 998 to 1018 (LLLVIAELASLAPEIVLHSVM) and 1085 to 1105 (LFTYLIRTLGSDLSLHVLLFL). HEAT repeat units follow at residues 1333–1372 (ESVLEKLLPVLLHGIKKNVDIELEQAYLDTFAIIVNKFGA), 1749–1787 (ETLVHGLIKYISNEKEDNSSSTKIWTIRALKSIFQKMGE), and 1790–1828 (LTYLPTLIPYIAELLEDDDQAVEMEVRSGLVRVIENVLG).

Belongs to the HEATR1/UTP10 family. In terms of assembly, component of the ribosomal small subunit (SSU) processome.

The protein localises to the nucleus. It is found in the nucleolus. Its subcellular location is the membrane. Its function is as follows. Involved in nucleolar processing of pre-18S ribosomal RNA. Involved in ribosome biosynthesis. This is U3 small nucleolar RNA-associated protein 10 from Scheffersomyces stipitis (strain ATCC 58785 / CBS 6054 / NBRC 10063 / NRRL Y-11545) (Yeast).